The following is a 308-amino-acid chain: Heme A synthase (308 aa).

At Met1–Lys8 the chain is on the cytoplasmic side. Residues Trp9–Thr29 form a helical membrane-spanning segment. The Extracellular segment spans residues Lys30–Ser67. Cysteines 37 and 44 form a disulfide. Glu60 is an active-site residue. A heme o-binding site is contributed by His63. A helical transmembrane segment spans residues Ala68–Ile88. The Cytoplasmic portion of the chain corresponds to Lys89–Pro93. The helical transmembrane segment at Leu94–Leu114 threads the bilayer. Residues Trp115 to Ala123 lie on the Extracellular side of the membrane. A helical membrane pass occupies residues Leu124–Phe144. His125 lines the heme o pocket. Residues Asp145–Leu161 lie on the Cytoplasmic side of the membrane. The helical transmembrane segment at Arg162 to Val182 threads the bilayer. Over Arg183–Arg215 the chain is Extracellular. His214 is a binding site for heme b. The helical transmembrane segment at Thr216–Tyr236 threads the bilayer. Residues Gln237 to Tyr244 are Cytoplasmic-facing. A helical transmembrane segment spans residues Gly245–Phe265. The Extracellular segment spans residues Thr266–Leu270. Residues Ile271–Ile291 traverse the membrane as a helical segment. His276 lines the heme b pocket. Over Val292 to Tyr308 the chain is Cytoplasmic.

Belongs to the COX15/CtaA family. Type 1 subfamily. As to quaternary structure, interacts with CtaB. Heme b is required as a cofactor.

It localises to the cell membrane. The catalysed reaction is Fe(II)-heme o + 2 A + H2O = Fe(II)-heme a + 2 AH2. Its pathway is porphyrin-containing compound metabolism; heme A biosynthesis; heme A from heme O: step 1/1. In terms of biological role, catalyzes the conversion of heme O to heme A by two successive hydroxylations of the methyl group at C8. The first hydroxylation forms heme I, the second hydroxylation results in an unstable dihydroxymethyl group, which spontaneously dehydrates, resulting in the formyl group of heme A. The sequence is that of Heme A synthase from Staphylococcus carnosus (strain TM300).